The following is a 2012-amino-acid chain: MATPLAVNSAASLWGPYKDIWHKVGNALWRRQPEAVHLLDKILKKHKPDFISLFKNPPKNVQQHEKVQKASTEGVAIQGQQGTRLLPEQLIKEAFILSDLFDIGELAAVELLLAGEHQQPHFPGLTRGLVAVLLYWDGKRCIANSLKALIQSRRGKTWTLELSPELASMTTRFTDELMEQGLTYKVLTLVSQIDVNNEFEKLQRERGLGSEKHRKEVSDLIKECRQSLAESLFAWACQSPLGKEDTLLLIGHLERVTVEANGSLDAVNLALLMALLYCFDISFIEQSTEERDDMIHQLPLLTEKQYIATIHSRLQDSQLWKLPGLQATVRLAWALALRGISQLPDVTALAEFTEADEAMAELAIADNVFLFLMESVVVSEYFYQEEFYIRRVHNLITDFLALMPMKVKQLRNRADEDARMIHMSMQMGNEPPISLRRDLEHLMLLIGELYKKNPFHLELALEYWCPTEPLQTPTIMGSYLGVAHQRPPQRQVVLSKFVRQMGDLLPPTIYIPYLKMLQGLANGPQCAHYCFSLLKVNGSSHVENIQGAGGSPVSWEHFFHSLMLYHEHLRKDLPSADSVQYRHLPSRGITQKEQDGLIAFLQLTSTIITWSENARLALCEHPQWTPVVVILGLLQCSIPPVLKAELLKTLAAFGKSPEIAASLWQSLEYTQILQTVRIPSQRQAIGIEVELNEIESRCEEYPLTRAFCQLISTLVESSFPSNLGAGLRPPGFDPYLQFLRDSVFLRFRTRAYRRAAEKWEVAEVVLEVFYKLLRDYEPQLEDFVDQFVELQGEEIIAYKPPGFSLMYHLLNESPMLELALSLLEEGVKQLDTYAPFPGKKHLEKAVQHCLALLNLTLQKENLFMDLLRESQLALIVCPLEQLLQGINPRTKKADNVVNIARYLYHGNTNPELAFESAKILCCISCNSNIQIKLVGDFTHDQSISQKLMAGFVECLDCEDAEEFVRLEEGSELEKKLVAIRHETRIHILNLLITSLECNPPNLALYLLGFELKKPVSTTNLQDPGVLGCPRTCLHAILNILEKGTEGRTGPVAVRESPQLAELCYQVIYQLCACSDTSGPTMRYLRTSQDFLFSQLQYLPFSNKEYEISMLNQMSWLMKTASIELRVTSLNRQRSHTQRLLHLLLDDMPVKPYSDGEGGIEDENRSVSGFLHFDTATKVRRKILNILDSIDFSQEIPEPLQLDFFDRAQIEQVIANCEHKNLRGQTVCNVKLLHRVLVAEVNALQGMAAIGQRPLLMEEISTVLQYVVGRNKLLQCLHAKRHALESWRQLVEIILTACPQDLIQAEDRQLIIRDILQDVHDKILDDEAAQELMPVVAGAVFTLTAHLSQAVLTEQKETSVLGPAEAHYAFMLDSCFTSPPPEENPLVGFASIGDSSLYIILKKLLDFILKTGGGFQRVRTHLYGSLLYYLQIAQRPDEPDTLEAAKKTMWERLTAPEDVFSKLQRENIAIIESYGAALMEVVCRDACDGHEIGRMLALALLDRIVSVDKQQQWLLYLSNSGYLKVLVDSLVEDDRTLQSLLTPQPPLLKALYTYESKMAFLTRVAKIQQGALELLRSGVIVRLAQCQVYDMRPETDPQSMFGMRDPPMFIPTPVDRYRQILLPALQLCQVILTSSMAQHLQAAGQVLQFLISHSDTIQAILRCQDVSAGSLQELALLTGIISKAALPGILSELDVDVNEGSLMELQGHIGRFQRQCLGLLSRFGGSDRLRQFKFQDDNVEGDKVSKKDEIELAMQQICANVMEYCQSLMLQSSPTFQHAVCLFTPSLSETVNRDGPRQDTQAPVVPYWRLPGLGIIIYLLKQSANDFFSYYDSHRQSVSKLQNVEQLPPDEIKELCQSVMPAGVDKISTAQKYVLARRRLVKVINNRAKLLSLCSFIIETCLFILWRHLEYYLLHCMPTDSQDSLFASRTLFKSRRLQDSFASETNLDFRSGLAIVSQHDLDQLQADAINAFGESLQKKLLDIEGLYSKVRSRYSFIQALVRRIRGLLRISRN.

Residue alanine 2 is modified to N-acetylalanine. The residue at position 3 (threonine 3) is a Phosphothreonine. Phosphoserine is present on residues serine 575, serine 1165, serine 1167, serine 1939, and serine 1942.

It belongs to the NUP186/NUP192/NUP205 family. In terms of assembly, part of the nuclear pore complex (NPC). Forms a complex with NUP35, NUP93, NUP155 and lamin B. Does not interact with TPR. Interacts with TMEM209 and MYC. Expressed in the testis.

It is found in the nucleus membrane. The protein localises to the nucleus. The protein resides in the nuclear pore complex. Functionally, plays a role in the nuclear pore complex (NPC) assembly and/or maintenance. May anchor NUP62 and other nucleoporins, but not NUP153 and TPR, to the NPC. In association with TMEM209, may be involved in nuclear transport of various nuclear proteins in addition to MYC. This Homo sapiens (Human) protein is Nuclear pore complex protein Nup205 (NUP205).